The primary structure comprises 644 residues: Protein SNOWY COTYLEDON 3 (644 aa).

Disordered stretches follow at residues 1–129, 162–252, and 290–414; these read MVAA…TRTE, ETAT…DGRL, and SDTD…SRVR. Low complexity predominate over residues 53-77; it reads SPSPSHSTTTTTTTATSTSTSSSSS. Residues 91-112 are compositionally biased toward polar residues; sequence LSRTTNSASNLVYTPSSLPKRS. Basic and acidic residues predominate over residues 172 to 190; it reads CTPERRRATPVRDQRENSK. Composition is skewed to polar residues over residues 290-302 and 314-332; these read SDTD…STNG and TRSL…QETN. Composition is skewed to low complexity over residues 343–370 and 397–412; these read SPQC…SSDS and ATAT…SPSR. Residues 463-466 carry the QWRF motif motif; that stretch reads QWRF.

This sequence belongs to the QWRF family. As to expression, expressed in young developing tissues, such as seedlings, roots, flowers, buds and young siliques, and to a lesser extent in mature green tissues.

The protein resides in the peroxisome. Probable microtubule-associated peroxisomal protein required for chloroplast biogenesis and for the formation of the prolamellar body and prothylakoids in etioplasts. Not involved in peroxisomal metabolism, including mobilization of storage compounds during germination, fatty acid beta-oxydation or photorespiration. The sequence is that of Protein SNOWY COTYLEDON 3 (SCO3) from Arabidopsis thaliana (Mouse-ear cress).